A 443-amino-acid chain; its full sequence is Serine/threonine-protein phosphatase 2A 55 kDa regulatory subunit B beta isoform (443 aa).

WD repeat units follow at residues 22–61 (TEADIISTVEFNSTGELLATGDKGGRVVIFQREQENKNQP), 87–128 (EIEE…KRPE), 171–209 (AHTYHINSISVNSDYETYMSADDLRINLWNLEITNRSFN), 220–260 (ELTE…LCDR), 279–317 (EIISSISDVKFNHSGRYIMTRDYLTVKVWDLNMENRPIE), 334–375 (ENDC…DVTL), and 410–443 (DFSKKILHTAWHPSENIIAVAATNNLYIFQDKVN).

This sequence belongs to the phosphatase 2A regulatory subunit B family. PP2A consists of a common heterodimeric core enzyme, composed of a 36 kDa catalytic subunit (subunit C) and a 65 kDa constant regulatory subunit (PR65 or subunit A), that associates with a variety of regulatory subunits.

Its subcellular location is the cytoplasm. It is found in the cytoskeleton. The protein localises to the membrane. The B regulatory subunit might modulate substrate selectivity and catalytic activity, and might also direct the localization of the catalytic enzyme to a particular subcellular compartment. Negatively controls the initiation of oocyte maturation. In Xenopus tropicalis (Western clawed frog), this protein is Serine/threonine-protein phosphatase 2A 55 kDa regulatory subunit B beta isoform (ppp2r2b).